We begin with the raw amino-acid sequence, 583 residues long: Radixin (583 aa).

The FERM domain occupies 5 to 295 (INVRVTTMDA…GNHELYMRRR (291 aa)). 60-63 (KLNK) lines the a 1,2-diacyl-sn-glycero-3-phospho-(1D-myo-inositol) pocket. Lys-83 is subject to N6-succinyllysine. Lys-278 serves as a coordination point for a 1,2-diacyl-sn-glycero-3-phospho-(1D-myo-inositol). 3 disordered regions span residues 310-336 (REEK…AEKE), 374-407 (ELDQ…AKQA), and 458-526 (KTKE…RVNK). The segment covering 374 to 400 (ELDQERKRAKEEAERLEKERRAAEEAK) has biased composition (basic and acidic residues). Residues 469–480 (APPPPPPPPVVP) are compositionally biased toward pro residues. 2 stretches are compositionally biased toward basic and acidic residues: residues 483 to 492 (ENEHDEHDEN) and 506 to 525 (MNHR…ERVN). Position 564 is a phosphothreonine; by ROCK2 (Thr-564).

Interacts with CPNE1 (via VWFA domain) and CPNE4 (via VWFA domain). Binds NHERF1. Interacts with NHERF1, NHERF2, LAYN, MME/NEP and ICAM2. Interacts (via FERM domain) with SPN/CD43 cytoplasmic tail. Interacts with CD44. Interacts with CLIC5; may work together in a complex which also includes EZR and MYO6 to stabilize linkages between the plasma membrane and subjacent actin cytoskeleton at the base of stereocilia. Phosphorylated by tyrosine-protein kinases. Phosphorylation by ROCK2 suppresses the head-to-tail association of the N-terminal and C-terminal halves resulting in an opened conformation which is capable of actin and membrane-binding.

The protein localises to the cell membrane. It is found in the cytoplasm. It localises to the cytoskeleton. Its subcellular location is the cleavage furrow. The protein resides in the cell projection. The protein localises to the microvillus. It is found in the stereocilium. A head-to-tail association, of the N-terminal and C-terminal halves results in a closed conformation (inactive form) which is incapable of actin or membrane-binding. Its function is as follows. Probably plays a crucial role in the binding of the barbed end of actin filaments to the plasma membrane. In Sus scrofa (Pig), this protein is Radixin (RDX).